A 603-amino-acid chain; its full sequence is Sabinene hydrate synthase, chloroplastic (603 aa).

The N-terminal 47 residues, 1-47, are a transit peptide targeting the chloroplast; sequence MSTISINHVGLLRNPLHGKSKRASINKSWSLCLPRSSSASRLVKPCR. Mn(2+) is bound by residues Asp357 and Asp361. A DDXXD motif motif is present at residues 357–361; that stretch reads DDVYD. Homodimerization regions lie at residues 363–369 and 435–472; these read YGTLDEL and EAEW…VSIP. Asp501 and Glu509 together coordinate Mn(2+).

Belongs to the terpene synthase family. Homodimer. Mn(2+) serves as cofactor. The cofactor is Mg(2+).

The protein resides in the plastid. It localises to the chloroplast. The catalysed reaction is (2E)-geranyl diphosphate + H2O = sabinene hydrate + diphosphate. It functions in the pathway secondary metabolite biosynthesis; terpenoid biosynthesis. In terms of biological role, involved in the biosynthesis of phenolic monoterpenes natural products. Monoterpene synthase which catalyzes the conversion of geranyl diphosphate (GPP) to sabinene hydrate, mainly (Z)-sabinene hydrate and to a lower extent (E)-sabinene hydrate, and the formation of minor amounts and traces of several other monoterpenes (e.g. mainly alpha-thujene, alpha-pinene and myrcene). The polypeptide is Sabinene hydrate synthase, chloroplastic (Thymus vulgaris (Thyme)).